A 310-amino-acid polypeptide reads, in one-letter code: p-hydroxybenzoic acid efflux pump subunit AaeA (310 aa).

The helical transmembrane segment at 12–32 (AITLVLVILAFIAIFRAWVYY) threads the bilayer.

The protein belongs to the membrane fusion protein (MFP) (TC 8.A.1) family.

The protein resides in the cell inner membrane. In terms of biological role, forms an efflux pump with AaeB. This chain is p-hydroxybenzoic acid efflux pump subunit AaeA, found in Salmonella gallinarum (strain 287/91 / NCTC 13346).